We begin with the raw amino-acid sequence, 445 residues long: Trigger factor (445 aa).

Residues Gly172–Pro257 form the PPIase FKBP-type domain.

The protein belongs to the FKBP-type PPIase family. Tig subfamily.

It is found in the cytoplasm. It catalyses the reaction [protein]-peptidylproline (omega=180) = [protein]-peptidylproline (omega=0). In terms of biological role, involved in protein export. Acts as a chaperone by maintaining the newly synthesized protein in an open conformation. Functions as a peptidyl-prolyl cis-trans isomerase. This Polynucleobacter necessarius subsp. necessarius (strain STIR1) protein is Trigger factor.